Here is a 285-residue protein sequence, read N- to C-terminus: Bifunctional protein FolD (285 aa).

NADP(+)-binding positions include 165–167 (GRS) and Ser-190.

It belongs to the tetrahydrofolate dehydrogenase/cyclohydrolase family. As to quaternary structure, homodimer.

It catalyses the reaction (6R)-5,10-methylene-5,6,7,8-tetrahydrofolate + NADP(+) = (6R)-5,10-methenyltetrahydrofolate + NADPH. The catalysed reaction is (6R)-5,10-methenyltetrahydrofolate + H2O = (6R)-10-formyltetrahydrofolate + H(+). It functions in the pathway one-carbon metabolism; tetrahydrofolate interconversion. Functionally, catalyzes the oxidation of 5,10-methylenetetrahydrofolate to 5,10-methenyltetrahydrofolate and then the hydrolysis of 5,10-methenyltetrahydrofolate to 10-formyltetrahydrofolate. This chain is Bifunctional protein FolD, found in Staphylococcus haemolyticus (strain JCSC1435).